Here is a 947-residue protein sequence, read N- to C-terminus: Vacuolar membrane protease (947 aa).

The Cytoplasmic segment spans residues 1-15; that stretch reads MRFKALLRAIFRFRK. Residues 16 to 36 form a helical membrane-spanning segment; the sequence is TNFSILLIITYAIIIALLVFD. Residues 37–358 are Vacuolar-facing; sequence RSRYKLDLPN…GLFFVVVDTK (322 aa). N-linked (GlcNAc...) asparagine glycosylation is found at Asn-46, Asn-92, Asn-108, and Asn-121. Zn(2+) is bound by residues His-156 and Asp-168. The Proton acceptor role is filled by Glu-200. Glu-201, Glu-226, and His-300 together coordinate Zn(2+). N-linked (GlcNAc...) asparagine glycosylation occurs at Asn-319. A helical transmembrane segment spans residues 359 to 379; the sequence is HLFYADIFMLIVGPILLMMKA. Residues 380 to 391 lie on the Cytoplasmic side of the membrane; that stretch reads HLDKRRRLERSR. Residues 392–412 traverse the membrane as a helical segment; it reads LVQLRLLLSLGLSVVFLLLLT. The Vacuolar portion of the chain corresponds to 413–428; that stretch reads KSLNSFNPFVYSADYR. A helical membrane pass occupies residues 429–449; it reads TPLTGLFLLFVTVNYLIVTLA. Over 450 to 458 the chain is Cytoplasmic; sequence ERLNPTESY. Residues 459–479 traverse the membrane as a helical segment; sequence KTVAINQIFIIAWLMQLYITL. Residues 480-489 lie on the Vacuolar side of the membrane; it reads RMAKSDFTLT. Residues 490–510 traverse the membrane as a helical segment; the sequence is GTYPLSIFSGCLIVALSLGLF. Residues 511–601 lie on the Cytoplasmic side of the membrane; sequence GTKNKAVNDA…DKNSDFSKHY (91 aa). Composition is skewed to polar residues over residues 522–531 and 546–567; these read NSSVRYASSQ and NINQVRDTGNQEVTSNTNTDLH. The segment at 522–573 is disordered; that stretch reads NSSVRYASSQNDEDNPLPSQDRGENINQVRDTGNQEVTSNTNTDLHSNAEEV. The chain crosses the membrane as a helical span at residues 602 to 622; the sequence is NWIVQFLCIVPISSFIFLFSL. Residues 623–641 lie on the Vacuolar side of the membrane; sequence DYTLDAIHKMVQETTDDVQ. The chain crosses the membrane as a helical span at residues 642-662; the sequence is LICIIITIGVILLALPILPFI. Residues 663 to 669 lie on the Cytoplasmic side of the membrane; sequence SKLNYQS. Residues 670 to 690 form a helical membrane-spanning segment; the sequence is SVIIAIIGVLLFGKSLVMQPF. The Vacuolar segment spans residues 691–947; it reads SEIAPLKVRF…LVVIKDKIQL (257 aa). Asn-742, Asn-784, Asn-801, and Asn-833 each carry an N-linked (GlcNAc...) asparagine glycan.

The protein belongs to the peptidase M28 family. Zn(2+) serves as cofactor.

Its subcellular location is the vacuole membrane. In terms of biological role, may be involved in vacuolar sorting and osmoregulation. The polypeptide is Vacuolar membrane protease (Candida glabrata (strain ATCC 2001 / BCRC 20586 / JCM 3761 / NBRC 0622 / NRRL Y-65 / CBS 138) (Yeast)).